The sequence spans 484 residues: MTTSGVRVRIAPSPTGEPHVGTAYIALFNYLFAKKHGGEFILRIEDTDATRSTPEFETKVLDALKWCGLEWKEGPDIGGPYGPYRQSDRKPMYQPYAEELLDKGHAFRCFCTPARLEQMREAQRAAGKPPKYDGLCLSLTAEEVTSRMAAGETTVIRMKIPAEGSCDFTDGVYGDVSIPWDSVDMQVLIKADGMPTYHMANVIDDHLMKITHVARGEEWLASVPKHILLYRYFGWDQPVFMHLSLMRNADKSKLSKRKNPTSISYYSALGYIPEALMNFLGLFFIQIAEGEELLTMEELSAKFDPENLSKAGAIFDIQKLDWLNGRWIREKLSEEEFQARVLAWAMENDRLKAGLRLSQTRISKLGELPDLAGFLLKSDLGLQPSDFAKIKSPPEEILEILNTVQPDLEKILEWNVETIEAELRAIADRMGKKLKVVVSPLFVAVSGSSRSLPLFDSMAILGRSVVRQRLKLAAQAVAALVGSK.

Residues 12–22 carry the 'HIGH' region motif; it reads PSPTGEPHVGT. Positions 253 to 257 match the 'KMSKS' region motif; it reads KLSKR. Lys-256 contributes to the ATP binding site.

Belongs to the class-I aminoacyl-tRNA synthetase family. Glutamate--tRNA ligase type 1 subfamily. As to quaternary structure, monomer.

It is found in the cytoplasm. The enzyme catalyses tRNA(Glu) + L-glutamate + ATP = L-glutamyl-tRNA(Glu) + AMP + diphosphate. Functionally, catalyzes the attachment of glutamate to tRNA(Glu) in a two-step reaction: glutamate is first activated by ATP to form Glu-AMP and then transferred to the acceptor end of tRNA(Glu). The sequence is that of Glutamate--tRNA ligase from Rhizobium leguminosarum bv. trifolii (strain WSM2304).